A 179-amino-acid polypeptide reads, in one-letter code: Large ribosomal subunit protein uL15 (179 aa).

It belongs to the universal ribosomal protein uL15 family. Part of the 50S ribosomal subunit.

Binds to the 23S rRNA. In Archaeoglobus fulgidus (strain ATCC 49558 / DSM 4304 / JCM 9628 / NBRC 100126 / VC-16), this protein is Large ribosomal subunit protein uL15.